We begin with the raw amino-acid sequence, 335 residues long: Gibberellin 2-beta-dioxygenase 3 (335 aa).

The Fe2OG dioxygenase domain occupies 175-278 (ESDSCLRMNH…RISMIYFAGP (104 aa)). 3 residues coordinate Fe cation: histidine 202, aspartate 204, and histidine 259. Arginine 269 is a catalytic residue.

It belongs to the iron/ascorbate-dependent oxidoreductase family. GA2OX subfamily. The cofactor is Fe(2+). In terms of tissue distribution, not expressed in the apex.

The catalysed reaction is gibberellin A1 + 2-oxoglutarate + O2 = gibberellin A8 + succinate + CO2. It functions in the pathway plant hormone biosynthesis; gibberellin biosynthesis. Its function is as follows. Catalyzes the 2-beta-hydroxylation of several biologically active gibberellins, leading to the homeostatic regulation of their endogenous level. Catabolism of gibberellins (GAs) plays a central role in plant development. Converts GA9/GA20 to GA51/GA29 and GA4/GA1 to GA34/GA8. The chain is Gibberellin 2-beta-dioxygenase 3 (GA2OX3) from Arabidopsis thaliana (Mouse-ear cress).